Here is a 458-residue protein sequence, read N- to C-terminus: tRNA modification GTPase MnmE (458 aa).

3 residues coordinate (6S)-5-formyl-5,6,7,8-tetrahydrofolate: Arg-22, Glu-84, and Arg-123. The 160-residue stretch at 220–379 (GIATAIIGRP…LETAIADLFF (160 aa)) folds into the TrmE-type G domain. Asn-230 contacts K(+). GTP is bound by residues 230 to 235 (NVGKSS), 249 to 255 (TDIAGTT), and 274 to 277 (DTAG). Ser-234 is a binding site for Mg(2+). Positions 249, 251, and 254 each coordinate K(+). Thr-255 is a Mg(2+) binding site. Lys-458 lines the (6S)-5-formyl-5,6,7,8-tetrahydrofolate pocket.

This sequence belongs to the TRAFAC class TrmE-Era-EngA-EngB-Septin-like GTPase superfamily. TrmE GTPase family. Homodimer. Heterotetramer of two MnmE and two MnmG subunits. K(+) is required as a cofactor.

The protein resides in the cytoplasm. Exhibits a very high intrinsic GTPase hydrolysis rate. Involved in the addition of a carboxymethylaminomethyl (cmnm) group at the wobble position (U34) of certain tRNAs, forming tRNA-cmnm(5)s(2)U34. The protein is tRNA modification GTPase MnmE of Bacillus cereus (strain ATCC 10987 / NRS 248).